The following is a 128-amino-acid chain: Ribonuclease P protein component (128 aa).

It belongs to the RnpA family. As to quaternary structure, consists of a catalytic RNA component (M1 or rnpB) and a protein subunit.

The enzyme catalyses Endonucleolytic cleavage of RNA, removing 5'-extranucleotides from tRNA precursor.. Functionally, RNaseP catalyzes the removal of the 5'-leader sequence from pre-tRNA to produce the mature 5'-terminus. It can also cleave other RNA substrates such as 4.5S RNA. The protein component plays an auxiliary but essential role in vivo by binding to the 5'-leader sequence and broadening the substrate specificity of the ribozyme. This is Ribonuclease P protein component from Prochlorococcus marinus (strain MIT 9313).